Reading from the N-terminus, the 257-residue chain is Large ribosomal subunit protein eL8z (257 aa).

Belongs to the eukaryotic ribosomal protein eL8 family.

This Arabidopsis thaliana (Mouse-ear cress) protein is Large ribosomal subunit protein eL8z (RPL7AA).